Consider the following 353-residue polypeptide: Deoxyribonuclease-2-alpha (353 aa).

The signal sequence occupies residues 1–19 (MATLRSLLLAALLWVPAEA). An intrachain disulfide couples cysteine 22 to cysteine 161. N-linked (GlcNAc...) asparagine glycosylation is found at asparagine 71, asparagine 88, asparagine 214, and asparagine 268. Disulfide bonds link cysteine 269–cysteine 349 and cysteine 310–cysteine 329. The active site involves histidine 297.

It belongs to the DNase II family. As to expression, highly expressed in fetal liver macrophages.

It localises to the lysosome. It catalyses the reaction Endonucleolytic cleavage to nucleoside 3'-phosphates and 3'-phosphooligonucleotide end-products.. Its function is as follows. Hydrolyzes DNA under acidic conditions with a preference for double-stranded DNA. Plays a major role in the clearance of nucleic acids generated through apoptosis, hence preventing autoinflammation. Necessary for proper fetal development and for definitive erythropoiesis in fetal liver and bone marrow, where it degrades nuclear DNA expelled from erythroid precursor cells. The polypeptide is Deoxyribonuclease-2-alpha (Dnase2) (Mus musculus (Mouse)).